Consider the following 328-residue polypeptide: Nucleotide-binding protein BLD_0430 (328 aa).

Residues 1 to 35 (MNQQTTNRDTGEAAATNAPANSATSTSTPDNQPTP) are disordered. A compositionally biased stretch (low complexity) spans 13–29 (AAATNAPANSATSTSTP). Residue 46–53 (GMSGAGRS) participates in ATP binding. A GTP-binding site is contributed by 101 to 104 (DVRS).

The protein belongs to the RapZ-like family.

Functionally, displays ATPase and GTPase activities. This chain is Nucleotide-binding protein BLD_0430, found in Bifidobacterium longum (strain DJO10A).